A 130-amino-acid polypeptide reads, in one-letter code: Small ribosomal subunit protein uS8 (130 aa).

The protein belongs to the universal ribosomal protein uS8 family. In terms of assembly, part of the 30S ribosomal subunit.

One of the primary rRNA binding proteins, it binds directly to 16S rRNA central domain where it helps coordinate assembly of the platform of the 30S subunit. This Methanococcus voltae protein is Small ribosomal subunit protein uS8.